The following is a 329-amino-acid chain: Ketol-acid reductoisomerase (NADP(+)) (329 aa).

The KARI N-terminal Rossmann domain maps to 2 to 182 (ARMYYEKDVD…GATRAGVLET (181 aa)). NADP(+)-binding positions include 25–28 (YGSQ), Ser-51, Ser-53, and 83–86 (DEKQ). The active site involves His-108. Position 134 (Gly-134) interacts with NADP(+). A KARI C-terminal knotted domain is found at 183–328 (TFKEETETDL…RNLRSMMSFL (146 aa)). Mg(2+) is bound by residues Asp-191, Glu-195, Glu-227, and Glu-231. Ser-252 serves as a coordination point for substrate.

It belongs to the ketol-acid reductoisomerase family. Mg(2+) is required as a cofactor.

It catalyses the reaction (2R)-2,3-dihydroxy-3-methylbutanoate + NADP(+) = (2S)-2-acetolactate + NADPH + H(+). The catalysed reaction is (2R,3R)-2,3-dihydroxy-3-methylpentanoate + NADP(+) = (S)-2-ethyl-2-hydroxy-3-oxobutanoate + NADPH + H(+). It functions in the pathway amino-acid biosynthesis; L-isoleucine biosynthesis; L-isoleucine from 2-oxobutanoate: step 2/4. Its pathway is amino-acid biosynthesis; L-valine biosynthesis; L-valine from pyruvate: step 2/4. Its function is as follows. Involved in the biosynthesis of branched-chain amino acids (BCAA). Catalyzes an alkyl-migration followed by a ketol-acid reduction of (S)-2-acetolactate (S2AL) to yield (R)-2,3-dihydroxy-isovalerate. In the isomerase reaction, S2AL is rearranged via a Mg-dependent methyl migration to produce 3-hydroxy-3-methyl-2-ketobutyrate (HMKB). In the reductase reaction, this 2-ketoacid undergoes a metal-dependent reduction by NADPH to yield (R)-2,3-dihydroxy-isovalerate. The chain is Ketol-acid reductoisomerase (NADP(+)) from Clostridioides difficile (strain 630) (Peptoclostridium difficile).